Here is a 238-residue protein sequence, read N- to C-terminus: Oil body-associated protein 1A (238 aa).

The protein belongs to the OBAP family. Expressed in seeds, but not in leaves or roots. Highest expression in scutellum. Detected in embryo axis and endosperm.

It is found in the lipid droplet. In Zea mays (Maize), this protein is Oil body-associated protein 1A.